Consider the following 292-residue polypeptide: Porphobilinogen deaminase (292 aa).

Residue Cys235 is modified to S-(dipyrrolylmethanemethyl)cysteine.

It belongs to the HMBS family. In terms of assembly, monomer. The cofactor is dipyrromethane.

The catalysed reaction is 4 porphobilinogen + H2O = hydroxymethylbilane + 4 NH4(+). The protein operates within porphyrin-containing compound metabolism; protoporphyrin-IX biosynthesis; coproporphyrinogen-III from 5-aminolevulinate: step 2/4. Tetrapolymerization of the monopyrrole PBG into the hydroxymethylbilane pre-uroporphyrinogen in several discrete steps. The sequence is that of Porphobilinogen deaminase from Acetivibrio thermocellus (strain ATCC 27405 / DSM 1237 / JCM 9322 / NBRC 103400 / NCIMB 10682 / NRRL B-4536 / VPI 7372) (Clostridium thermocellum).